The primary structure comprises 99 residues: Cytochrome c-555 (99 aa).

The heme c site is built by C23, C26, H27, and M73.

In terms of processing, binds 1 heme c group covalently per subunit.

This Prosthecochloris aestuarii protein is Cytochrome c-555.